The sequence spans 307 residues: MAALYACTKCHQRFPFEALSQGQQLCKECRIAHPIVKCTYCRTEFQQESKTNTICKKCAQNVKLYGTPKPCQYCNIIAAFIGNKCQRCTNSEKKYGPPHSCEQCKQQCAFDRKDDRKKVDGKLLCWLCTLSYKRVLQKTKEQCKHLSSSSRASLQEKEQYSRLSSGSHYNSQKTLSTSSIQNEIPKKKAKFDAISANGDSFSPDLALDSPGTDHFVIIAQLKEEVATLKKMLHQKDQMILEKEKKITELKADLQYQESQMRAKMNQMEKTHKEVMEQLQAKNRELLKQAAALSKGKKPEKSGAITSP.

Disordered regions lie at residues 161 to 181 and 287 to 307; these read SRLSSGSHYNSQKTLSTSSIQ and KQAAALSKGKKPEKSGAITSP. A coiled-coil region spans residues 217-297; sequence IIAQLKEEVA…QAAALSKGKK (81 aa).

It belongs to the FAM76 family.

The polypeptide is Protein FAM76A (FAM76A) (Gallus gallus (Chicken)).